The following is a 209-amino-acid chain: Ubiquitin-conjugating enzyme E2 S (209 aa).

One can recognise a UBC core domain in the interval 14 to 160; that stretch reads QTIRQVMREL…ARMMTEIHAQ (147 aa). Cysteine 98 functions as the Glycyl thioester intermediate in the catalytic mechanism. The interval 164 to 209 is disordered; sequence CAAGAAGDSKDDDGPSTKKHAGLDKKLQDKKKEKLLKEKKRMLKRL. Positions 171-199 are enriched in basic and acidic residues; sequence DSKDDDGPSTKKHAGLDKKLQDKKKEKLL. Basic residues predominate over residues 200–209; sequence KEKKRMLKRL.

It belongs to the ubiquitin-conjugating enzyme family.

It catalyses the reaction S-ubiquitinyl-[E1 ubiquitin-activating enzyme]-L-cysteine + [E2 ubiquitin-conjugating enzyme]-L-cysteine = [E1 ubiquitin-activating enzyme]-L-cysteine + S-ubiquitinyl-[E2 ubiquitin-conjugating enzyme]-L-cysteine.. It participates in protein modification; protein ubiquitination. In terms of biological role, catalyzes the covalent attachment of ubiquitin to other proteins. Acts as an essential factor of the anaphase promoting complex/cyclosome (APC/C), a cell cycle-regulated ubiquitin ligase that controls progression through mitosis. Acts by specifically elongating polyubiquitin chains initiated by the E2 enzyme vih/UbcH10 on APC/C substrates, enhancing the degradation of APC/C substrates by the proteasome and promoting mitotic exit. The sequence is that of Ubiquitin-conjugating enzyme E2 S from Drosophila ananassae (Fruit fly).